A 243-amino-acid chain; its full sequence is Venom protease (243 aa).

Residues 1–243 (VVGGKPAKLG…DSFILPALKK (243 aa)) enclose the Peptidase S1 domain. Cysteines 34 and 50 form a disulfide. Active-site charge relay system residues include histidine 49 and aspartate 97. 2 cysteine pairs are disulfide-bonded: cysteine 165–cysteine 178 and cysteine 189–cysteine 217. Serine 193 functions as the Charge relay system in the catalytic mechanism.

The protein belongs to the peptidase S1 family. Expressed by the venom duct.

The protein localises to the secreted. This chain is Venom protease, found in Bombus pensylvanicus (American bumblebee).